The sequence spans 59 residues: Large ribosomal subunit protein bL32 (59 aa).

This sequence belongs to the bacterial ribosomal protein bL32 family.

The sequence is that of Large ribosomal subunit protein bL32 from Mesoplasma florum (strain ATCC 33453 / NBRC 100688 / NCTC 11704 / L1) (Acholeplasma florum).